We begin with the raw amino-acid sequence, 728 residues long: Polyribonucleotide nucleotidyltransferase (728 aa).

The Mg(2+) site is built by Asp-489 and Asp-495. The KH domain occupies 556-615 (PKIDTIKIDVDKIKIVIGKGGETIDKIIAETGVKIDIDEEGNVSIYSSDQDAINRAKEII). The region spanning 625-693 (DEVYHAKVVR…AKGRVDASMK (69 aa)) is the S1 motif domain. The tract at residues 691–728 (SMKALLPRPPKPEKSDKHHDKGHPHKKHEEAPLTQTEE) is disordered. Positions 700–709 (PKPEKSDKHH) are enriched in basic and acidic residues.

Belongs to the polyribonucleotide nucleotidyltransferase family. The cofactor is Mg(2+).

The protein resides in the cytoplasm. The enzyme catalyses RNA(n+1) + phosphate = RNA(n) + a ribonucleoside 5'-diphosphate. Its function is as follows. Involved in mRNA degradation. Catalyzes the phosphorolysis of single-stranded polyribonucleotides processively in the 3'- to 5'-direction. This chain is Polyribonucleotide nucleotidyltransferase, found in Streptococcus gordonii (strain Challis / ATCC 35105 / BCRC 15272 / CH1 / DL1 / V288).